The primary structure comprises 80 residues: uncharacterized protein (80 aa).

Residues 1-23 form the signal peptide; sequence MKWNNMLKAAGIAVLLFSVFAYA.

This is an uncharacterized protein from Bacillus subtilis (strain 168).